Here is a 96-residue protein sequence, read N- to C-terminus: Acylphosphatase (96 aa).

An Acylphosphatase-like domain is found at 4 to 96; sequence RCEFLIFGKV…ESLNDFEILR (93 aa). Active-site residues include Arg-19 and Asn-42.

Belongs to the acylphosphatase family.

It carries out the reaction an acyl phosphate + H2O = a carboxylate + phosphate + H(+). In Helicobacter hepaticus (strain ATCC 51449 / 3B1), this protein is Acylphosphatase (acyP).